The primary structure comprises 268 residues: Undecaprenyl-diphosphatase (268 aa).

Helical transmembrane passes span 9–29 (VILGVVEGVTEFLPVSSTGHL), 47–67 (FDVLIQLGAILAILALYFAKL), 83–103 (FIIGVLVAFLPAAVIGAAAGS), 107–127 (LFLFNPWVVCFSLIVGGAVLL), 144–164 (FPVLMYFYIGCAQCVAMIPGV), 184–204 (AAEFSFFLAIPTMVGAFVYDL), 218–238 (IVAVGFVVSFITAIIVVKTFL), and 246–266 (FQLFAWWRVVVGTLGLIALAM).

The protein belongs to the UppP family.

Its subcellular location is the cell inner membrane. It catalyses the reaction di-trans,octa-cis-undecaprenyl diphosphate + H2O = di-trans,octa-cis-undecaprenyl phosphate + phosphate + H(+). Functionally, catalyzes the dephosphorylation of undecaprenyl diphosphate (UPP). Confers resistance to bacitracin. This chain is Undecaprenyl-diphosphatase, found in Rhodopseudomonas palustris (strain HaA2).